A 331-amino-acid chain; its full sequence is 7,8-didemethyl-8-hydroxy-5-deazariboflavin synthase (331 aa).

The region spanning 6–244 (ITFSKNAFLP…ADVAVQIPPN (239 aa)) is the Radical SAM core domain. Residues cysteine 20, cysteine 24, and cysteine 27 each contribute to the [4Fe-4S] cluster site.

This sequence belongs to the radical SAM superfamily. CofG family. Consists of two subunits, CofG and CofH. Requires [4Fe-4S] cluster as cofactor.

The catalysed reaction is 5-amino-5-(4-hydroxybenzyl)-6-(D-ribitylimino)-5,6-dihydrouracil + S-adenosyl-L-methionine = 7,8-didemethyl-8-hydroxy-5-deazariboflavin + 5'-deoxyadenosine + L-methionine + NH4(+) + H(+). It functions in the pathway cofactor biosynthesis; coenzyme F0 biosynthesis. Functionally, catalyzes the radical-mediated synthesis of 7,8-didemethyl-8-hydroxy-5-deazariboflavin from 5-amino-5-(4-hydroxybenzyl)-6-(D-ribitylimino)-5,6-dihydrouracil. This is 7,8-didemethyl-8-hydroxy-5-deazariboflavin synthase from Methanoculleus marisnigri (strain ATCC 35101 / DSM 1498 / JR1).